Reading from the N-terminus, the 276-residue chain is Eukaryotic translation initiation factor 3 subunit G (276 aa).

A Phosphoserine modification is found at serine 148. The 80-residue stretch at 195–274 (TTLKISQLNS…LILHLEWSKK (80 aa)) folds into the RRM domain.

It belongs to the eIF-3 subunit G family. In terms of assembly, component of the eukaryotic translation initiation factor 3 (eIF-3) complex.

The protein localises to the cytoplasm. Its function is as follows. RNA-binding component of the eukaryotic translation initiation factor 3 (eIF-3) complex, which is involved in protein synthesis of a specialized repertoire of mRNAs and, together with other initiation factors, stimulates binding of mRNA and methionyl-tRNAi to the 40S ribosome. The eIF-3 complex specifically targets and initiates translation of a subset of mRNAs involved in cell proliferation. This subunit can bind 18S rRNA. This Debaryomyces hansenii (strain ATCC 36239 / CBS 767 / BCRC 21394 / JCM 1990 / NBRC 0083 / IGC 2968) (Yeast) protein is Eukaryotic translation initiation factor 3 subunit G.